A 116-amino-acid polypeptide reads, in one-letter code: UPF0329 protein ECU05_1650 (116 aa).

Belongs to the UPF0329 family.

This chain is UPF0329 protein ECU05_1650, found in Encephalitozoon cuniculi (strain GB-M1) (Microsporidian parasite).